A 50-amino-acid chain; its full sequence is U23-theraphotoxin-Cg1a 2 (50 aa).

3 disulfides stabilise this stretch: cysteine 22/cysteine 36, cysteine 29/cysteine 41, and cysteine 35/cysteine 47.

Belongs to the neurotoxin 10 (Hwtx-1) family. 64 (Jztx-20) subfamily. In terms of tissue distribution, expressed by the venom gland.

The protein localises to the secreted. Functionally, probable ion channel inhibitor. In Chilobrachys guangxiensis (Chinese earth tiger tarantula), this protein is U23-theraphotoxin-Cg1a 2.